Reading from the N-terminus, the 381-residue chain is tRNA-cytidine(32) 2-sulfurtransferase (381 aa).

The PP-loop motif signature appears at 101–106 (SGGKDS). [4Fe-4S] cluster-binding residues include C176, C179, and C267.

The protein belongs to the TtcA family. Homodimer. It depends on Mg(2+) as a cofactor. [4Fe-4S] cluster serves as cofactor.

It is found in the cytoplasm. It catalyses the reaction cytidine(32) in tRNA + S-sulfanyl-L-cysteinyl-[cysteine desulfurase] + AH2 + ATP = 2-thiocytidine(32) in tRNA + L-cysteinyl-[cysteine desulfurase] + A + AMP + diphosphate + H(+). Its pathway is tRNA modification. In terms of biological role, catalyzes the ATP-dependent 2-thiolation of cytidine in position 32 of tRNA, to form 2-thiocytidine (s(2)C32). The sulfur atoms are provided by the cysteine/cysteine desulfurase (IscS) system. The chain is tRNA-cytidine(32) 2-sulfurtransferase from Psychrobacter cryohalolentis (strain ATCC BAA-1226 / DSM 17306 / VKM B-2378 / K5).